Consider the following 609-residue polypeptide: Probable ubiquitin-conjugating enzyme E2 25 (609 aa).

Disordered stretches follow at residues 70-99 (EEDE…LDPE) and 151-185 (ADKE…SQFS). Positions 156 to 178 (ASSSKSSHANNGNNSSKKATKAS) are enriched in low complexity. Positions 332–492 (DWAKRIQDEW…TFILSLKTMV (161 aa)) constitute a UBC core domain. The Glycyl thioester intermediate role is filled by C418.

Belongs to the ubiquitin-conjugating enzyme family. As to expression, expressed in seeds, pistils, siliques, hypocotyls and leaves.

It catalyses the reaction S-ubiquitinyl-[E1 ubiquitin-activating enzyme]-L-cysteine + [E2 ubiquitin-conjugating enzyme]-L-cysteine = [E1 ubiquitin-activating enzyme]-L-cysteine + S-ubiquitinyl-[E2 ubiquitin-conjugating enzyme]-L-cysteine.. It functions in the pathway protein modification; protein ubiquitination. In terms of biological role, accepts the ubiquitin from the E1 complex and catalyzes its covalent attachment to other proteins. This is Probable ubiquitin-conjugating enzyme E2 25 (UBC25) from Arabidopsis thaliana (Mouse-ear cress).